Here is a 259-residue protein sequence, read N- to C-terminus: Ras-related protein Rab-34 (259 aa).

Met1 carries the N-acetylmethionine modification. GTP contacts are provided by Ser62, Val63, Gly64, Lys65, Thr66, Asp78, Tyr81, and Thr84. Thr66 contributes to the Mg(2+) binding site. Positions 71 to 89 (RFCKDTFDKNYKATIGVDF) match the Switch 1 motif. Mg(2+)-binding residues include Thr84 and Asp107. Positions 108–127 (TAGQERFKCIASTYYRGAQA) match the Switch 2 motif. GTP contacts are provided by Gly110, Lys167, Asp169, and Ser198. A phosphoserine mark is found at Ser241 and Ser244. S-geranylgeranyl cysteine attachment occurs at residues Cys257 and Cys258.

The protein belongs to the small GTPase superfamily. Rab family. Interacts with RILP. The GTP-bound form interacts with REP15. Mg(2+) serves as cofactor.

The protein localises to the cytoplasm. The protein resides in the golgi apparatus. It localises to the cytoplasmic vesicle. It is found in the phagosome. Its subcellular location is the phagosome membrane. The protein localises to the cell projection. The protein resides in the cilium. It localises to the cytoskeleton. It is found in the microtubule organizing center. Its subcellular location is the centrosome. The protein localises to the centriole. It carries out the reaction GTP + H2O = GDP + phosphate + H(+). Its activity is regulated as follows. Regulated by guanine nucleotide exchange factors (GEFs) which promote the exchange of bound GDP for free GTP. Regulated by GTPase activating proteins (GAPs) which increase the GTP hydrolysis activity. Inhibited by GDP dissociation inhibitors (GDIs). The small GTPases Rab are key regulators of intracellular membrane trafficking, from the formation of transport vesicles to their fusion with membranes. Rabs cycle between an inactive GDP-bound form and an active GTP-bound form that is able to recruit to membranes different sets of downstream effectors directly responsible for vesicle formation, movement, tethering and fusion. RAB34 transports protein involved in the redistribution of lysosomes to the peri-Golgi region. Plays a role in the maturation of phagosomes that engulf pathogens, such as S.aureus and M.tuberculosis. Plays a role in the fusion of phagosomes with lysosomes. Required for the early steps of intracellular ciliogenesis, the cilium assembly pathway initiated by trafficking and docking of ciliary vesicles to the centrioles in the cytoplasm, followed by axoneme formation in the cytoplasm. After axoneme elongation, the centrioles migrate close to the cell surface so that ciliary vesicles can fuse with the plasma membrane to expose cilia to the extracellular space. It seems dispensable for ciliogenesis via the extracellular pathway where cilium assembly begins after migration and docking of the centriole to the plasma membrane. Also acts as a positive regulator of hedgehog signaling and regulates ciliary function. The protein is Ras-related protein Rab-34 (RAB34) of Sus scrofa (Pig).